The sequence spans 87 residues: ParB-like nuclease domain-containing protein YnaK (87 aa).

This is ParB-like nuclease domain-containing protein YnaK (ynaK) from Escherichia coli (strain K12).